Consider the following 293-residue polypeptide: 4-hydroxy-tetrahydrodipicolinate synthase (293 aa).

Residue Thr45 participates in pyruvate binding. The active-site Proton donor/acceptor is Tyr133. Lys162 serves as the catalytic Schiff-base intermediate with substrate. Ile204 provides a ligand contact to pyruvate.

The protein belongs to the DapA family. Homotetramer; dimer of dimers.

It is found in the cytoplasm. The catalysed reaction is L-aspartate 4-semialdehyde + pyruvate = (2S,4S)-4-hydroxy-2,3,4,5-tetrahydrodipicolinate + H2O + H(+). It participates in amino-acid biosynthesis; L-lysine biosynthesis via DAP pathway; (S)-tetrahydrodipicolinate from L-aspartate: step 3/4. Its function is as follows. Catalyzes the condensation of (S)-aspartate-beta-semialdehyde [(S)-ASA] and pyruvate to 4-hydroxy-tetrahydrodipicolinate (HTPA). This chain is 4-hydroxy-tetrahydrodipicolinate synthase, found in Brucella suis biovar 1 (strain 1330).